Here is a 568-residue protein sequence, read N- to C-terminus: Acetate--CoA ligase CCL3 (568 aa).

Residues 204–212, 340–345, D437, 449–452, and K547 contribute to the ATP site; these read TSGTTASPK, HTYGLS, and IKDR. Residues 272 to 340 form an SBD1 region; that stretch reads TAKGVYSAIA…MSEKGFKVAH (69 aa). The tract at residues 341-417 is SBD2; that stretch reads TYGLSETYGP…MRGNAVMKGY (77 aa).

Belongs to the ATP-dependent AMP-binding enzyme family. Mostly expressed in glandular trichomes (lupulin glands) after flowering and in old leaves, and, to a lower extent, in stems, young leaves, cones and flowers.

The protein localises to the cytoplasm. Its subcellular location is the cytosol. It carries out the reaction acetate + ATP + CoA = acetyl-CoA + AMP + diphosphate. The enzyme catalyses propanoate + ATP + CoA = propanoyl-CoA + AMP + diphosphate. The catalysed reaction is butanoate + ATP + CoA = butanoyl-CoA + AMP + diphosphate. It catalyses the reaction 3-methylbutanoate + ATP + CoA = 3-methylbutanoyl-CoA + AMP + diphosphate. It carries out the reaction pentanoate + ATP + CoA = pentanoyl-CoA + AMP + diphosphate. The enzyme catalyses hexanoate + ATP + CoA = hexanoyl-CoA + AMP + diphosphate. The catalysed reaction is 2-methylpropanoate + ATP + CoA = 2-methylpropanoyl-CoA + AMP + diphosphate. It catalyses the reaction 2-methylbutanoate + ATP + CoA = 2-methylbutanoyl-CoA + AMP + diphosphate. It carries out the reaction 2-methylpentanoate + ATP + CoA = 2-methylpentanoyl-CoA + AMP + diphosphate. The enzyme catalyses 3-methylpentanoate + ATP + CoA = 3-methylpentanoyl-CoA + AMP + diphosphate. The catalysed reaction is 4-methylpentanoate + ATP + CoA = 4-methylpentanoyl-CoA + AMP + diphosphate. It participates in secondary metabolite biosynthesis. Its function is as follows. Involved in the biosynthesis of prenylated phenolics natural products which contribute to the bitter taste of beer and display broad biological activities. Catalyzes the ligation of CoA on propanoate to produce propanoyl-CoA. Can also use 2-methylpropanoate (isobutyric acid), acetate, butanoate, isovalerate, pentanoate, hexanoate, 2-methylbutanoate, 2-methylpentanoate, 3-methylpentanoate and 4-methylpentanoate as substrates with a lower efficiency. Triggers the formation of very short chain acyl-CoAs from the corresponding fatty acids, including acetic acid, propanoic acid, butyric acid and its isomer. This Humulus lupulus (European hop) protein is Acetate--CoA ligase CCL3.